The chain runs to 216 residues: ACTLECEGKLPSAKAWGTCKELLQLTKLDGVQDGEKYQDNNDSHYIAKKYGGFMKRYGGFMKKMDELYHAEPEEDDAGGEILAKNYGGFMKKEYDSNRDASDLLRELLATSGDPESAIYHDNNSETPGEMNKRYGGFMRGYRRSTDLEDETRGIQKRYGGFMRRVGRPEWWQDYQKRYGGFMTRFTDSFLPSDEDGESYSKENPDMEKRYGGFMRF.

5 consecutive propeptides follow at residues methionine 64–asparagine 85, glutamate 93–asparagine 131, serine 144–glutamine 155, valine 165–glutamine 175, and threonine 183–glutamate 207. A disordered region spans residues proline 114–arginine 133.

The protein belongs to the opioid neuropeptide precursor family. In terms of processing, the N-terminal domain contains 6 conserved cysteines thought to be involved in disulfide bonding and/or processing.

It localises to the secreted. Functionally, enkephalin neuropeptides compete with and mimic the effects of opiate drugs. They play a role in a number of physiologic functions, including pain perception and responses to stress. In Xenopus laevis (African clawed frog), this protein is Proenkephalin-A-B (penk-b).